The following is a 97-amino-acid chain: Small ribosomal subunit protein bS20 (97 aa).

This sequence belongs to the bacterial ribosomal protein bS20 family.

Functionally, binds directly to 16S ribosomal RNA. The chain is Small ribosomal subunit protein bS20 from Methylibium petroleiphilum (strain ATCC BAA-1232 / LMG 22953 / PM1).